A 470-amino-acid chain; its full sequence is Ribulose bisphosphate carboxylase large chain (470 aa).

The substrate site is built by N118 and T168. K170 (proton acceptor) is an active-site residue. K172 contacts substrate. Positions 196, 198, and 199 each coordinate Mg(2+). The residue at position 196 (K196) is an N6-carboxylysine. Catalysis depends on H289, which acts as the Proton acceptor. 3 residues coordinate substrate: R290, H322, and S374.

It belongs to the RuBisCO large chain family. Type I subfamily. As to quaternary structure, heterohexadecamer of 8 large chains and 8 small chains; disulfide-linked. The disulfide link is formed within the large subunit homodimers. RuBisCO interacts with the C-terminus of CcmM, and can be found in complexes that also include carbonic anhydrase (ccaA). RuBisCO associates with both the internal and shell portion of carboxysomes. Requires Mg(2+) as cofactor. The disulfide bond which can form in the large chain dimeric partners within the hexadecamer appears to be associated with oxidative stress and protein turnover.

The protein resides in the carboxysome. It catalyses the reaction 2 (2R)-3-phosphoglycerate + 2 H(+) = D-ribulose 1,5-bisphosphate + CO2 + H2O. The catalysed reaction is D-ribulose 1,5-bisphosphate + O2 = 2-phosphoglycolate + (2R)-3-phosphoglycerate + 2 H(+). RuBisCO catalyzes two reactions: the carboxylation of D-ribulose 1,5-bisphosphate, the primary event in carbon dioxide fixation, as well as the oxidative fragmentation of the pentose substrate in the photorespiration process. Both reactions occur simultaneously and in competition at the same active site. This Synechocystis sp. (strain ATCC 27184 / PCC 6803 / Kazusa) protein is Ribulose bisphosphate carboxylase large chain.